Reading from the N-terminus, the 495-residue chain is Tripartite motif-containing protein 5 (495 aa).

A2 is modified (N-acetylalanine). The RING-type zinc-finger motif lies at 15–60 (CPICLELLTEPLSLHCGHSFCQACITANHKKSMLYKEGERSCPVCR). S87 carries the post-translational modification Phosphoserine. Residues 92–133 (QKVDHCARHGEKLLLFCQEDRKVICWLCERSQEHRGHHTFLM) form a B box-type zinc finger. Residues C97, H100, C119, and H125 each coordinate Zn(2+). Positions 137-225 (AQEYHVKLQT…LTKSETEMVQ (89 aa)) form a coiled coil. Residues 187–200 (FEQLREILDWEESN) form a required for interaction with GABARAP and for autophagy region. Positions 283–495 (LKGILDMFRE…VPMTLCSPSS (213 aa)) constitute a B30.2/SPRY domain.

The protein belongs to the TRIM/RBCC family. In terms of assembly, can form homodimers and homotrimers. In addition to lower-order dimerization, also exhibits a higher-order multimerization and both low- and high-order multimerizations are essential for its restriction activity. Interacts with BTBD1 and BTBD2. Interacts with PSMC4, PSMC5, PSMD7 and HSPA8/HSC70. Interacts (via B30.2/SPRY domain) with HSPA1A/B. Interacts with PSMC2, MAP3K7/TAK1, TAB2 and TAB3. Interacts with SQSTM1. Interacts with TRIM6 and TRIM34. Interacts with ULK1 (phosphorylated form), GABARAP, GABARAPL1, GABARAPL2, MAP1LC3A, MAP1LC3C and BECN1. In terms of processing, degraded in a proteasome-independent fashion in the absence of viral infection but in a proteasome-dependent fashion following exposure to restriction sensitive virus. Autoubiquitinated in a RING finger- and UBE2D2-dependent manner. Monoubiquitinated by TRIM21. Deubiquitinated by Yersinia YopJ. Ubiquitination may not lead to proteasomal degradation.

Its subcellular location is the cytoplasm. The protein localises to the nucleus. It catalyses the reaction S-ubiquitinyl-[E2 ubiquitin-conjugating enzyme]-L-cysteine + [acceptor protein]-L-lysine = [E2 ubiquitin-conjugating enzyme]-L-cysteine + N(6)-ubiquitinyl-[acceptor protein]-L-lysine.. It participates in protein modification; protein ubiquitination. Its function is as follows. Capsid-specific restriction factor that prevents infection from non-host-adapted retroviruses. Blocks viral replication early in the life cycle, after viral entry but before reverse transcription. In addition to acting as a capsid-specific restriction factor, also acts as a pattern recognition receptor that activates innate immune signaling in response to the retroviral capsid lattice. Binding to the viral capsid triggers its E3 ubiquitin ligase activity, and in concert with the heterodimeric ubiquitin conjugating enzyme complex UBE2V1-UBE2N (also known as UBC13-UEV1A complex) generates 'Lys-63'-linked polyubiquitin chains, which in turn are catalysts in the autophosphorylation of the MAP3K7/TAK1 complex (includes TAK1, TAB2, and TAB3). Activation of the MAP3K7/TAK1 complex by autophosphorylation results in the induction and expression of NF-kappa-B and MAPK-responsive inflammatory genes, thereby leading to an innate immune response in the infected cell. Plays a role in regulating autophagy through activation of autophagy regulator BECN1 by causing its dissociation from its inhibitors BCL2 and TAB2. This Pygathrix nemaeus (Red-shanked douc langur) protein is Tripartite motif-containing protein 5 (TRIM5).